A 242-amino-acid chain; its full sequence is UDP-2,3-diacylglucosamine hydrolase (242 aa).

Residues Asp9, His11, Asp42, Asn79, and His114 each coordinate Mn(2+). 79-80 (NR) lines the substrate pocket. Residues Asp122, Ser160, Asn164, Lys167, and His195 each contribute to the substrate site. Mn(2+)-binding residues include His195 and His197.

This sequence belongs to the LpxH family. It depends on Mn(2+) as a cofactor.

The protein localises to the cell inner membrane. The enzyme catalyses UDP-2-N,3-O-bis[(3R)-3-hydroxytetradecanoyl]-alpha-D-glucosamine + H2O = 2-N,3-O-bis[(3R)-3-hydroxytetradecanoyl]-alpha-D-glucosaminyl 1-phosphate + UMP + 2 H(+). It participates in glycolipid biosynthesis; lipid IV(A) biosynthesis; lipid IV(A) from (3R)-3-hydroxytetradecanoyl-[acyl-carrier-protein] and UDP-N-acetyl-alpha-D-glucosamine: step 4/6. Its function is as follows. Hydrolyzes the pyrophosphate bond of UDP-2,3-diacylglucosamine to yield 2,3-diacylglucosamine 1-phosphate (lipid X) and UMP by catalyzing the attack of water at the alpha-P atom. Involved in the biosynthesis of lipid A, a phosphorylated glycolipid that anchors the lipopolysaccharide to the outer membrane of the cell. The protein is UDP-2,3-diacylglucosamine hydrolase of Shewanella loihica (strain ATCC BAA-1088 / PV-4).